A 198-amino-acid chain; its full sequence is Holliday junction branch migration complex subunit RuvA (198 aa).

Positions M1 to H63 are domain I. Residues T64 to K142 form a domain II region. The interval A143–K147 is flexible linker. The tract at residues A148 to G198 is domain III.

The protein belongs to the RuvA family. As to quaternary structure, homotetramer. Forms an RuvA(8)-RuvB(12)-Holliday junction (HJ) complex. HJ DNA is sandwiched between 2 RuvA tetramers; dsDNA enters through RuvA and exits via RuvB. An RuvB hexamer assembles on each DNA strand where it exits the tetramer. Each RuvB hexamer is contacted by two RuvA subunits (via domain III) on 2 adjacent RuvB subunits; this complex drives branch migration. In the full resolvosome a probable DNA-RuvA(4)-RuvB(12)-RuvC(2) complex forms which resolves the HJ.

It is found in the cytoplasm. The RuvA-RuvB-RuvC complex processes Holliday junction (HJ) DNA during genetic recombination and DNA repair, while the RuvA-RuvB complex plays an important role in the rescue of blocked DNA replication forks via replication fork reversal (RFR). RuvA specifically binds to HJ cruciform DNA, conferring on it an open structure. The RuvB hexamer acts as an ATP-dependent pump, pulling dsDNA into and through the RuvAB complex. HJ branch migration allows RuvC to scan DNA until it finds its consensus sequence, where it cleaves and resolves the cruciform DNA. The sequence is that of Holliday junction branch migration complex subunit RuvA from Streptococcus pyogenes serotype M18 (strain MGAS8232).